A 340-amino-acid polypeptide reads, in one-letter code: Ketol-acid reductoisomerase (NADP(+)) (340 aa).

In terms of domain architecture, KARI N-terminal Rossmann spans 3-182 (VEMLYEADVK…GSARVGLLVT (180 aa)). Residues 26–29 (YGSQ), arginine 49, serine 53, and 83–86 (DEIQ) contribute to the NADP(+) site. Residue histidine 108 is part of the active site. Glycine 134 lines the NADP(+) pocket. A KARI C-terminal knotted domain is found at 183 to 328 (TFKEETEEDL…AELRKAMPFV (146 aa)). Mg(2+) contacts are provided by aspartate 191, glutamate 195, glutamate 227, and glutamate 231. Serine 252 serves as a coordination point for substrate.

Belongs to the ketol-acid reductoisomerase family. Mg(2+) serves as cofactor.

The catalysed reaction is (2R)-2,3-dihydroxy-3-methylbutanoate + NADP(+) = (2S)-2-acetolactate + NADPH + H(+). It catalyses the reaction (2R,3R)-2,3-dihydroxy-3-methylpentanoate + NADP(+) = (S)-2-ethyl-2-hydroxy-3-oxobutanoate + NADPH + H(+). It functions in the pathway amino-acid biosynthesis; L-isoleucine biosynthesis; L-isoleucine from 2-oxobutanoate: step 2/4. It participates in amino-acid biosynthesis; L-valine biosynthesis; L-valine from pyruvate: step 2/4. Functionally, involved in the biosynthesis of branched-chain amino acids (BCAA). Catalyzes an alkyl-migration followed by a ketol-acid reduction of (S)-2-acetolactate (S2AL) to yield (R)-2,3-dihydroxy-isovalerate. In the isomerase reaction, S2AL is rearranged via a Mg-dependent methyl migration to produce 3-hydroxy-3-methyl-2-ketobutyrate (HMKB). In the reductase reaction, this 2-ketoacid undergoes a metal-dependent reduction by NADPH to yield (R)-2,3-dihydroxy-isovalerate. The sequence is that of Ketol-acid reductoisomerase (NADP(+)) from Streptococcus mutans serotype c (strain ATCC 700610 / UA159).